A 688-amino-acid polypeptide reads, in one-letter code: Glycine--tRNA ligase beta subunit (688 aa).

This sequence belongs to the class-II aminoacyl-tRNA synthetase family. Tetramer of two alpha and two beta subunits.

It is found in the cytoplasm. The catalysed reaction is tRNA(Gly) + glycine + ATP = glycyl-tRNA(Gly) + AMP + diphosphate. The protein is Glycine--tRNA ligase beta subunit of Clostridioides difficile (strain 630) (Peptoclostridium difficile).